A 74-amino-acid polypeptide reads, in one-letter code: EMBRYO SURROUNDING FACTOR 1-like protein 4 (74 aa).

A signal peptide spans 1 to 22 (MKSSHAYLVCILLLSLFSLHQC). Cystine bridges form between cysteine 36/cysteine 51, cysteine 41/cysteine 70, cysteine 49/cysteine 66, and cysteine 52/cysteine 59.

This sequence belongs to the MEG family. As to expression, expressed in flowers.

This Arabidopsis thaliana (Mouse-ear cress) protein is EMBRYO SURROUNDING FACTOR 1-like protein 4 (ESFL4).